Here is a 413-residue protein sequence, read N- to C-terminus: Aminopeptidase 2 (413 aa).

The a divalent metal cation site is built by Glu250, Glu316, Glu340, His345, His378, and Asp380.

It belongs to the peptidase M29 family. Homodimer. It depends on Co(2+) as a cofactor. Zn(2+) serves as cofactor. Mg(2+) is required as a cofactor.

Functionally, broad specificity metal-dependent exopeptidase, releasing all N-terminal amino acids. The protein is Aminopeptidase 2 of Geobacillus stearothermophilus (Bacillus stearothermophilus).